Consider the following 388-residue polypeptide: Chorismate synthase (388 aa).

NADP(+) contacts are provided by arginine 39 and arginine 45. The disordered stretch occupies residues glutamate 95–lysine 118. FMN contacts are provided by residues arginine 130–serine 132, asparagine 251–alanine 252, glycine 296, lysine 311–threonine 315, and arginine 337.

The protein belongs to the chorismate synthase family. As to quaternary structure, homotetramer. The cofactor is FMNH2.

The enzyme catalyses 5-O-(1-carboxyvinyl)-3-phosphoshikimate = chorismate + phosphate. The protein operates within metabolic intermediate biosynthesis; chorismate biosynthesis; chorismate from D-erythrose 4-phosphate and phosphoenolpyruvate: step 7/7. Catalyzes the anti-1,4-elimination of the C-3 phosphate and the C-6 proR hydrogen from 5-enolpyruvylshikimate-3-phosphate (EPSP) to yield chorismate, which is the branch point compound that serves as the starting substrate for the three terminal pathways of aromatic amino acid biosynthesis. This reaction introduces a second double bond into the aromatic ring system. The sequence is that of Chorismate synthase from Listeria monocytogenes serovar 1/2a (strain ATCC BAA-679 / EGD-e).